The sequence spans 415 residues: U-box domain-containing protein 29 (415 aa).

The region spanning 11-85 (TVPSFFKCPI…NIWSDSIGRR (75 aa)) is the U-box domain. 2 ARM repeats span residues 221–263 (KSKL…TISK) and 265–307 (KRVR…TLSS).

In terms of assembly, binds to SD129 and SD25.

The catalysed reaction is S-ubiquitinyl-[E2 ubiquitin-conjugating enzyme]-L-cysteine + [acceptor protein]-L-lysine = [E2 ubiquitin-conjugating enzyme]-L-cysteine + N(6)-ubiquitinyl-[acceptor protein]-L-lysine.. The protein operates within protein modification; protein ubiquitination. Functions as an E3 ubiquitin ligase. This Arabidopsis thaliana (Mouse-ear cress) protein is U-box domain-containing protein 29 (PUB29).